Here is a 70-residue protein sequence, read N- to C-terminus: Small ribosomal subunit protein bS21 (70 aa).

The protein belongs to the bacterial ribosomal protein bS21 family.

The chain is Small ribosomal subunit protein bS21 from Nitratidesulfovibrio vulgaris (strain ATCC 29579 / DSM 644 / CCUG 34227 / NCIMB 8303 / VKM B-1760 / Hildenborough) (Desulfovibrio vulgaris).